We begin with the raw amino-acid sequence, 95 residues long: Defensin-like protein 247 (95 aa).

The first 24 residues, 1–24 (MKFAAIFLVTCVFFSLFSSNLSQG), serve as a signal peptide directing secretion. Intrachain disulfides connect Cys-37–Cys-94, Cys-48–Cys-77, Cys-56–Cys-87, and Cys-75–Cys-89.

It belongs to the DEFL family.

Its subcellular location is the secreted. This is Defensin-like protein 247 (SCRL6) from Arabidopsis thaliana (Mouse-ear cress).